The following is a 244-amino-acid chain: Claudin-12 (244 aa).

Over 1–10 (MGCRDVHAAT) the chain is Cytoplasmic. The chain crosses the membrane as a helical span at residues 11–31 (VLSFLCGIASVAGLFAGTLLP). The Extracellular portion of the chain corresponds to 32-87 (NWRKLRLITFNRNEKNLTVYTGLWVKCARYDGSSDCLMYDTTWYSSVDQLDLRVLQ). Residues 88-108 (FALPLSMLIAMGALLLCLIGM) traverse the membrane as a helical segment. At 109 to 135 (CNTAFRSSVPNIKLAKCLVNSAGCHLV) the chain is on the cytoplasmic side. Residues 136–156 (AGLLFFLAGTVSLSPSIWVIF) form a helical membrane-spanning segment. Residues 157-174 (YNIHLNKKFEPVFSFDYA) are Extracellular-facing. The chain crosses the membrane as a helical span at residues 175 to 195 (VYVTIASAGGLFMTSLILFIW). Over 196–244 (YCTCKSLPSPFWQPLYSHPPSMHTYSQPYSARSRLSAIEIDIPVVSHTT) the chain is Cytoplasmic. Phosphoserine occurs at positions 228 and 231.

Belongs to the claudin family. As to quaternary structure, interacts with OCLN.

The protein localises to the cell junction. Its subcellular location is the tight junction. It localises to the cell membrane. In terms of biological role, plays a major role in tight junction-specific obliteration of the intercellular space, through calcium-independent cell-adhesion activity. The sequence is that of Claudin-12 (CLDN12) from Pongo abelii (Sumatran orangutan).